Consider the following 335-residue polypeptide: Phosphatidylinositol:ceramide inositolphosphotransferase (335 aa).

At 1–21 the chain is on the cytoplasmic side; it reads MVLMGPHSALRLLPLKTQAIR. A helical transmembrane segment spans residues 22-42; it reads FVLLLLLSVLILAVALLVTNA. The Extracellular portion of the chain corresponds to 43-72; sequence RMPDPKVVRPLPDIGFEVFPKVGWLEHLTD. A helical transmembrane segment spans residues 73-93; that stretch reads VCIFILNFLSLLVVFKLYLLH. The Cytoplasmic segment spans residues 94–98; sequence RQNEG. The helical transmembrane segment at 99 to 119 threads the bilayer; the sequence is LDELQPFSCCPLIGKIIFGVW. The Extracellular portion of the chain corresponds to 120-139; the sequence is DSGRQSGIEKRDAHLIAWIR. Residues 140-160 traverse the membrane as a helical segment; it reads YFTTYFIVLLFRAIVVVMTSY. Topologically, residues 161 to 179 are cytoplasmic; it reads PATDNHCQNPMKITNPVKN. A helical transmembrane segment spans residues 180–200; it reads VIMTLVTFGSGSIHCGDLMFS. Topologically, residues 201–203 are extracellular; it reads GHT. Histidine 202 is a catalytic residue. A helical membrane pass occupies residues 204 to 224; sequence VSITLSLLVQWIYGSMLHWVF. The Cytoplasmic portion of the chain corresponds to 225-335; it reads RPASVLLVLL…GPACGNFGHW (111 aa). Active-site residues include histidine 245 and aspartate 249.

Belongs to the sphingomyelin synthase family.

The protein localises to the membrane. Its function is as follows. Bidirectional lipid inositolphosphotransferase capable of converting phosphatidylinositol (PI) and ceramide to inositol-phosphorylceramide (IPC) and diacylglycerol (DAG) and vice versa. Direction is dependent on the relative concentrations of DAG and ceramide as phosphoinositol acceptors. Essential for viability of the pathogenic bloodstream stage of this human protozoan parasite and, consequently, can be considered as potential drug target. The sequence is that of Phosphatidylinositol:ceramide inositolphosphotransferase from Trypanosoma cruzi (strain CL Brener).